We begin with the raw amino-acid sequence, 68 residues long: Conotoxin tx3b (68 aa).

An N-terminal signal peptide occupies residues Met-1–Ala-19. The propeptide occupies Val-20–Arg-52. 3 disulfide bridges follow: Cys-53/Cys-67, Cys-54/Cys-63, and Cys-59/Cys-66. Residue Met-61 is modified to Methionine sulfoxide; partial. Cys-67 bears the Cysteine amide mark.

Expressed by the venom duct.

It is found in the secreted. Its function is as follows. Intracranial injection into mice causes scratching, hyperactivity and circular motion. In Conus textile (Cloth-of-gold cone), this protein is Conotoxin tx3b.